The chain runs to 205 residues: FAS-associated death domain protein (205 aa).

Residues 3–81 (PFLVLLHSLS…RHDLLQRLDD (79 aa)) form the DED domain. The 85-residue stretch at 97–181 (LQVAFDIVCD…LVADLVEEAQ (85 aa)) folds into the Death domain. A disordered region spans residues 181–205 (QESVSKSENMSPVLRDSTVSSSETP). Residue S191 is modified to Phosphoserine.

In terms of assembly, can self-associate. Component of the AIM2 PANoptosome complex, a multiprotein complex that drives inflammatory cell death (PANoptosis). Component of the death-induced signaling complex (DISC) composed of cell surface receptor FAS/CD95 or TNFRSF1A, adapter protein FADD and the CASP8 protease; recruitment of CASP8 to the complex is required for processing of CASP8 into the p18 and p10 subunits. Interacts (via death domain) with FAS (via death domain). Interacts directly (via DED domain) with NOL3 (via CARD domain); inhibits death-inducing signaling complex (DISC) assembly by inhibiting the increase in FAS-FADD binding induced by FAS activation. Interacts with CFLAR, PEA15 and MBD4. When phosphorylated, part of a complex containing HIPK3 and FAS. May interact with MAVS/IPS1. Interacts with MOCV v-CFLAR protein and PIDD1. Interacts with RIPK1 and TRADD. Interacts with stimulated TNFRSF10B. Interacts with DDX24.

It is found in the cytoplasm. In terms of biological role, apoptotic adapter molecule that recruits caspases CASP8 or CASP10 to the activated FAS/CD95 or TNFRSF1A/TNFR-1 receptors. The resulting aggregate called the death-inducing signaling complex (DISC) performs CASP8 proteolytic activation. Active CASP8 initiates the subsequent cascade of caspases mediating apoptosis. Involved in interferon-mediated antiviral immune response, playing a role in the positive regulation of interferon signaling. The chain is FAS-associated death domain protein from Mus musculus (Mouse).